The sequence spans 261 residues: DNA oxidative demethylase ALKBH2 (261 aa).

Positions 1–57 (MDRFLVKGAQGGLLRKQEEQEPTGEEPAVLGGDKESTRKRPRREAPGNGGHSAGPSW) are disordered. A PCNA-binding motif is present at residues 3–7 (RFLVK). Substrate-binding positions include 102–104 (FGK) and 122–124 (YTF). In terms of domain architecture, Fe2OG dioxygenase spans 152 to 257 (TFNFVLINRY…RVNLTFRKIL (106 aa)). The 2-oxoglutarate site is built by asparagine 159, tyrosine 161, and histidine 171. Residues histidine 171 and aspartate 173 each coordinate Fe cation. Aspartate 174 is a substrate binding site. 2-oxoglutarate-binding residues include histidine 236, arginine 248, threonine 252, and arginine 254. Histidine 236 contacts Fe cation.

Belongs to the alkB family. Interacts with PCNA homotrimer; this interaction is enhanced during the S-phase of the cell cycle. Interacts with nucleolar proteins NCL, UBTF and NPM1. Interacts with XRCC5-XRCC6 heterodimer. Fe(2+) is required as a cofactor. In terms of tissue distribution, detected in colon, small intestine, ovary, testis, prostate, skeletal muscle, heart, liver and urinary bladder.

Its subcellular location is the nucleus. The protein localises to the nucleolus. It is found in the nucleoplasm. The enzyme catalyses a methylated nucleobase within DNA + 2-oxoglutarate + O2 = a nucleobase within DNA + formaldehyde + succinate + CO2. The catalysed reaction is an N(1)-methyl-2'-deoxyadenosine in double-stranded DNA + 2-oxoglutarate + O2 = a 2'-deoxyadenosine in double-stranded DNA + formaldehyde + succinate + CO2 + H(+). It catalyses the reaction an N(1)-methyl-2'-deoxyadenosine in single-stranded DNA + 2-oxoglutarate + O2 = a 2'-deoxyadenosine in single-stranded DNA + formaldehyde + succinate + CO2 + H(+). It carries out the reaction an N(3)-methyl-2'-deoxycytidine in double-stranded DNA + 2-oxoglutarate + O2 = a 2'-deoxycytidine in double-stranded DNA + formaldehyde + succinate + CO2 + H(+). The enzyme catalyses an N(3)-methyl-2'-deoxycytidine in single-stranded DNA + 2-oxoglutarate + O2 = a 2'-deoxycytidine in single-stranded DNA + formaldehyde + succinate + CO2 + H(+). The catalysed reaction is a 1,N(6)-etheno-2'-deoxyadenosine in double-stranded DNA + 2-oxoglutarate + O2 + H2O = a 2'-deoxyadenosine in double-stranded DNA + glyoxal + succinate + CO2. It catalyses the reaction a 1,N(6)-etheno-2'-deoxyadenosine in single-stranded DNA + 2-oxoglutarate + O2 + H2O = a 2'-deoxyadenosine in single-stranded DNA + glyoxal + succinate + CO2. It carries out the reaction a 3,N(4)-etheno-2'-deoxycytidine in double-stranded DNA + 2-oxoglutarate + O2 + H2O = a 2'-deoxycytidine in double-stranded DNA + glyoxal + succinate + CO2. The enzyme catalyses a 3,N(4)-etheno-2'-deoxycytidine in single-stranded DNA + 2-oxoglutarate + O2 + H2O = a 2'-deoxycytidine in single-stranded DNA + glyoxal + succinate + CO2. The catalysed reaction is a 1,N(2)-etheno-2'-deoxyguanosine in double-stranded DNA + 2-oxoglutarate + O2 + H2O = a 2'-deoxyguanosine in double-stranded DNA + glyoxal + succinate + CO2. Its activity is regulated as follows. Activated by ascorbate and magnesium ions. Functionally, dioxygenase that repairs alkylated nucleic acid bases by direct reversal oxidative dealkylation. Can process both double-stranded (ds) and single-stranded (ss) DNA substrates, with a strong preference for dsDNA. Uses molecular oxygen, 2-oxoglutarate and iron as cofactors to oxidize the alkyl groups that are subsequently released as aldehydes, regenerating the undamaged bases. Probes the base pair stability, locates a weakened base pair and flips the damaged base to accommodate the lesion in its active site for efficient catalysis. Repairs monoalkylated bases, specifically N1-methyladenine and N3-methylcytosine, as well as higher order alkyl adducts such as bases modified with exocyclic bridged adducts known as etheno adducts including 1,N6-ethenoadenine, 3,N4-ethenocytosine and 1,N2-ethenoguanine. Acts as a gatekeeper of genomic integrity under alkylation stress. Efficiently repairs alkylated lesions in ribosomal DNA (rDNA). These lesions can cause ss- and dsDNA strand breaks that severely impair rDNA transcription. In a response mechanism to DNA damage, associates with PCNA at replication forks to repair alkylated adducts prior to replication. In Homo sapiens (Human), this protein is DNA oxidative demethylase ALKBH2 (ALKBH2).